Here is a 423-residue protein sequence, read N- to C-terminus: COP9 signalosome complex subunit 3 (423 aa).

At Ala2 the chain carries N-acetylalanine. Residues 197–365 form the PCI domain; it reads NFERALYFYE…GMVSFHDNPE (169 aa). The interval 402 to 423 is disordered; sequence QFVQKSMGSQEDDSGNKPSSYS. Phosphoserine occurs at positions 407, 410, and 423.

Belongs to the CSN3 family. Component of the CSN complex, composed of COPS1/GPS1, COPS2, COPS3, COPS4, COPS5, COPS6, COPS7 (COPS7A or COPS7B), COPS8 and COPS9. In the complex, it probably interacts directly with COPS1, COPS4, COPS8 and COPS9. Interacts with CK2 and PKD. Interacts with the translation initiation factor EIF3S6 and IKBKG. Interacts with ERCC6.

The protein localises to the cytoplasm. The protein resides in the nucleus. Component of the COP9 signalosome complex (CSN), a complex involved in various cellular and developmental processes. The CSN complex is an essential regulator of the ubiquitin (Ubl) conjugation pathway by mediating the deneddylation of the cullin subunits of SCF-type E3 ligase complexes, leading to decrease the Ubl ligase activity of SCF-type complexes such as SCF, CSA or DDB2. The complex is also involved in phosphorylation of p53/TP53, c-jun/JUN, IkappaBalpha/NFKBIA, ITPK1 and IRF8/ICSBP, possibly via its association with CK2 and PKD kinases. CSN-dependent phosphorylation of TP53 and JUN promotes and protects degradation by the Ubl system, respectively. Essential to maintain the survival of epiblast cells and thus the development of the postimplantation embryo. This Bos taurus (Bovine) protein is COP9 signalosome complex subunit 3 (COPS3).